We begin with the raw amino-acid sequence, 278 residues long: Indole-3-glycerol phosphate synthase (278 aa).

This sequence belongs to the TrpC family.

The catalysed reaction is 1-(2-carboxyphenylamino)-1-deoxy-D-ribulose 5-phosphate + H(+) = (1S,2R)-1-C-(indol-3-yl)glycerol 3-phosphate + CO2 + H2O. It functions in the pathway amino-acid biosynthesis; L-tryptophan biosynthesis; L-tryptophan from chorismate: step 4/5. This is Indole-3-glycerol phosphate synthase from Pseudomonas fluorescens (strain SBW25).